A 374-amino-acid polypeptide reads, in one-letter code: Histidinol-phosphate aminotransferase (374 aa).

Lys-215 bears the N6-(pyridoxal phosphate)lysine mark.

This sequence belongs to the class-II pyridoxal-phosphate-dependent aminotransferase family. Histidinol-phosphate aminotransferase subfamily. As to quaternary structure, homodimer. The cofactor is pyridoxal 5'-phosphate.

It catalyses the reaction L-histidinol phosphate + 2-oxoglutarate = 3-(imidazol-4-yl)-2-oxopropyl phosphate + L-glutamate. It participates in amino-acid biosynthesis; L-histidine biosynthesis; L-histidine from 5-phospho-alpha-D-ribose 1-diphosphate: step 7/9. The polypeptide is Histidinol-phosphate aminotransferase (Yersinia enterocolitica serotype O:8 / biotype 1B (strain NCTC 13174 / 8081)).